The sequence spans 427 residues: Protein adenylyltransferase Fic (427 aa).

Residues 17 to 37 form a helical membrane-spanning segment; the sequence is LLLASLAGLSIAIIVTHAPVF. 2 TPR repeats span residues 77 to 110 and 111 to 143; these read ALAALKAASAMKHGGKHSKAVKLFQQAVSLAPHH and PEILLQYGEFLEQHDVVQAEHLYNRALTANPLD. The short motif at 200-205 is the Inhibitory (S/T)XXXE(G/N) motif element; that stretch reads SNAIEG. ATP is bound by residues Glu204 and 286–289; that span reads VSDH. One can recognise a Fido domain in the interval 255–390; sequence ITIDDIIEIH…IRPFIRFVAR (136 aa). Residue His333 is part of the active site. Residues 337 to 344, 369 to 370, and Asn377 contribute to the ATP site; these read DGNGRTAR and YY.

It belongs to the fic family. In terms of assembly, homodimer.

The protein resides in the membrane. It carries out the reaction L-tyrosyl-[protein] + ATP = O-(5'-adenylyl)-L-tyrosyl-[protein] + diphosphate. The catalysed reaction is L-threonyl-[protein] + ATP = 3-O-(5'-adenylyl)-L-threonyl-[protein] + diphosphate. It catalyses the reaction 3-O-(5'-adenylyl)-L-threonyl-[protein] + H2O = L-threonyl-[protein] + AMP + H(+). With respect to regulation, the side chain of Glu-204 determines which of the two opposing activities (AMPylase or de-AMPylase) will take place. In response to endoplasmic reticulum stress, mediates de-AMPylase activity. Adenylyltransferase activity is inhibited by the inhibitory helix present at the N-terminus: Glu-204 binds ATP and competes with ATP-binding at Arg-344, thereby preventing adenylyltransferase activity. In unstressed cells, disengagement of Glu-204 promotes adenylyltransferase activity. Activation dissociates ATP-binding from Glu-204, allowing ordered binding of the entire ATP moiety with the alpha-phosphate in an orientation that is productive for accepting an incoming target hydroxyl side chain. Its function is as follows. Protein that can both mediate the addition of adenosine 5'-monophosphate (AMP) to specific residues of target proteins (AMPylation), and the removal of the same modification from target proteins (de-AMPylation), depending on the context. The side chain of Glu-204 determines which of the two opposing activities (AMPylase or de-AMPylase) will take place. Acts as a key regulator of the unfolded protein response (UPR) by mediating AMPylation or de-AMPylation of Hsc70-3/BiP. In unstressed cells, acts as an adenylyltransferase by mediating AMPylation of Hsc70-3/BiP, thereby inactivating it. In response to endoplasmic reticulum stress, acts as a phosphodiesterase by mediating removal of ATP (de-AMPylation) from Hsc70-3/BiP, leading to restore HSPA5/BiP activity. The polypeptide is Protein adenylyltransferase Fic (Nematostella vectensis (Starlet sea anemone)).